Reading from the N-terminus, the 340-residue chain is Short-chain dehydrogenase/reductase prx1 (340 aa).

Residues isoleucine 60, lysine 84, aspartate 104, asparagine 131, and lysine 162 each coordinate NADP(+). The active-site Proton donor is the serine 184. NADP(+)-binding residues include tyrosine 210 and lysine 214. Tyrosine 210 serves as the catalytic Proton acceptor. The Lowers pKa of active site Tyr role is filled by lysine 214.

Belongs to the short-chain dehydrogenases/reductases (SDR) family.

It functions in the pathway sesquiterpene biosynthesis. Its function is as follows. Short-chain dehydrogenase/reductase; part of the gene cluster that mediates the biosynthesis of PR-toxin, a bicyclic sesquiterpene belonging to the eremophilane class and acting as a mycotoxin. The first step of the pathway is catalyzed by the aristolochene synthase which performs the cyclization of trans,trans-farnesyl diphosphate (FPP) to the bicyclic sesquiterpene aristolochene. Following the formation of aristolochene, the non-oxygenated aristolochene is converted to the trioxygenated intermediate eremofortin B, via 7-epi-neopetasone. This conversion appears to involve three enzymes, a hydroxysterol oxidase-like enzyme, the quinone-oxidase prx3 that forms the quinone-type-structure in the bicyclic nucleus of aristolochene with the C8-oxo group and the C-3 hydroxyl group, and the P450 monooxygenase ORF6 that introduces the epoxide at the double bond between carbons 1 and 2. No monoxy or dioxy-intermediates have been reported to be released to the broth, so these three early oxidative reactions may be coupled together. Eremofortin B is further oxidized by another P450 monooxygenase, that introduces a second epoxide between carbons 7 and 11 prior to acetylation to eremofortin A by the acetyltransferase ORF8. The second epoxidation may be performed by a second P450 monooxygenase. After the acetylation step, eremofortin A is converted to eremofortin C and then to PR-toxin. First the conversion of eremofortin A to eremofortin C proceeds by oxidation of the side chain of the molecule at C-12 and is catalyzed by the short-chain oxidoreductase prx1. The cytochrome P450 monooxygenase ORF6 is probably also involved in this step. The primary alcohol formed at C-12 is finally oxidized by the short-chain alcohol dehydrogenase prx4 that forms PR-toxin. The sequence is that of Short-chain dehydrogenase/reductase prx1 from Penicillium roqueforti (strain FM164).